We begin with the raw amino-acid sequence, 330 residues long: WRKY transcription factor WRKY51 (330 aa).

A disordered region spans residues 39–61 (QTGTSERSPAPAPAQEQQQQQQV). Over residues 51 to 60 (PAQEQQQQQQ) the composition is skewed to low complexity. Positions 74-81 (FKKVISML) match the Nuclear localization signal motif. 2 disordered regions span residues 91–117 (RGPVVAQSSGPAASEPAPVRSSPSAVS) and 302–330 (YEGEHRHTPSAAGQDHPPAPPPPLALPLA). Low complexity predominate over residues 101–117 (PAASEPAPVRSSPSAVS). Positions 245-311 (KVADIPADDF…YEGEHRHTPS (67 aa)) form a DNA-binding region, WRKY. A compositionally biased stretch (pro residues) spans 318–330 (PPAPPPPLALPLA).

This sequence belongs to the WRKY group II-a family. As to expression, highly expressed in aleurone cells. In seeds, predominantly present in the plumule, radicle and scutellum of the embryo.

Its subcellular location is the nucleus. Transcription factor. Interacts, when in complex with WRKY71, specifically with the W box (5'-(T)TGAC[CT]-3'), a frequently occurring elicitor-responsive cis-acting element. Represses specifically gibberellic acid (GA)-induced promoters in aleurone cells, probably by interfering with GAM1. In Oryza sativa subsp. indica (Rice), this protein is WRKY transcription factor WRKY51.